A 134-amino-acid chain; its full sequence is uncharacterized protein (134 aa).

The protein belongs to the ycf68 family.

Its subcellular location is the plastid. It localises to the chloroplast. This is an uncharacterized protein from Saccharum hybrid (Sugarcane).